The primary structure comprises 1925 residues: Methylcytosine dioxygenase tet3-A (1925 aa).

The CXXC-type zinc finger occupies 62–103 (SNKKRKRCGVCVPCLRKEPCGACYNCVNRSTSHQICKMRKCE). Cys69, Cys72, Cys75, Cys81, Cys84, Cys87, Cys97, and Cys102 together coordinate Zn(2+). Disordered regions lie at residues 457–476 (KNAL…QNKK), 630–685 (KSQK…NAVF), 774–812 (GAKD…QNDL), and 833–892 (DFSL…PISH). The span at 465-476 (SPRQTSWEQNKK) shows a compositional bias: polar residues. Over residues 665–677 (KPPRKQVQIKKPR) the composition is skewed to basic residues. Positions 777–797 (DSCPTPSTDDASSSSGQGDSA) are enriched in low complexity. Polar residues-rich tracts occupy residues 841–856 (APSQ…QISG) and 883–892 (PALSNNPISH). Cys982, Cys984, Cys1042, His1068, and Cys1070 together coordinate Zn(2+). Arg1110 serves as a coordination point for 2-oxoglutarate. Residues Cys1120, Cys1122, Cys1138, Cys1147, and Cys1207 each coordinate Zn(2+). Cys1223 serves as a coordination point for 2-oxoglutarate. His1229 provides a ligand contact to Zn(2+). Residues His1231 and Asp1233 each coordinate Fe cation. His1265 is a binding site for 2-oxoglutarate. 4 disordered regions span residues 1307–1364 (SEPA…QTKP), 1474–1513 (LADG…KSFN), 1556–1600 (SVHS…LPND), and 1722–1769 (NWAS…EEEI). A compositionally biased stretch (basic and acidic residues) spans 1316–1347 (RQLDAKKAAAEKKKLQKEKLVSPDKTKQEPAD). Residues 1350 to 1363 (MCQQNPGVPQQQTK) are compositionally biased toward polar residues. The segment covering 1490-1499 (SYRRSSEVPH) has biased composition (basic and acidic residues). Polar residues-rich tracts occupy residues 1502–1513 (SLQNPNSQKSFN), 1556–1572 (SVHS…QTSD), and 1730–1742 (VGNS…SQNH). His1804 is a Fe cation binding site. 1819 to 1821 (RIS) provides a ligand contact to 2-oxoglutarate. Residues 1837 to 1870 (LALWEAKMKLLAERARVKEEEAARLGIKQEVKSL) adopt a coiled-coil conformation.

The protein belongs to the TET family. Fe(2+) is required as a cofactor. Requires Zn(2+) as cofactor. In terms of tissue distribution, detected in embryo (at protein level). Detected in embryonic head, in developing brain, neural tube and eye.

It is found in the nucleus. It localises to the chromosome. The catalysed reaction is a 5-methyl-2'-deoxycytidine in DNA + 2-oxoglutarate + O2 = a 5-hydroxymethyl-2'-deoxycytidine in DNA + succinate + CO2. The enzyme catalyses a 5-hydroxymethyl-2'-deoxycytidine in DNA + 2-oxoglutarate + O2 = a 5-formyl-2'-deoxycytidine in DNA + succinate + CO2 + H2O. It carries out the reaction a 5-formyl-2'-deoxycytidine in DNA + 2-oxoglutarate + O2 = a 5-carboxyl-2'-deoxycytidine in DNA + succinate + CO2 + H(+). Dioxygenase that catalyzes the conversion of the modified genomic base 5-methylcytosine (5mC) into 5-hydroxymethylcytosine (5hmC) and plays a key role in epigenetic chromatin reprogramming during embryonic development. Conversion of 5mC into 5hmC probably constitutes the first step in cytosine demethylation. Selectively binds to the promoter region of target genes and contributes to regulate the expression of numerous developmental genes, including pax6, rax, sox9 and six3. May also contribute to the regulation of target genes in ways that do not require its enzyme activity. This is Methylcytosine dioxygenase tet3-A from Xenopus laevis (African clawed frog).